Reading from the N-terminus, the 780-residue chain is Pendrin (780 aa).

Over 1–87 (MAAPGGRSEP…YRVKEWLLSD (87 aa)) the chain is Cytoplasmic. Residues 88–108 (VISGVSTGLVATLQGMAYALL) form a helical membrane-spanning segment. A topological domain (extracellular) is located at residue Ala109. Residues 110–130 (AVPVGYGLYSAFFPILTYFIF) form a helical membrane-spanning segment. Over 131–135 (GTSRH) the chain is Cytoplasmic. Residues 136-156 (ISVGPFPVVSLMVGSVVLSMA) form a helical membrane-spanning segment. Residues 157 to 191 (PDEHFLVSSSNGTVLNTTMIDTAARDTARVLIASA) lie on the Extracellular side of the membrane. A helical membrane pass occupies residues 192–212 (LTLLVGIIQLIFGGLQIGFIV). At 213–218 (RYLADP) the chain is on the cytoplasmic side. A helical membrane pass occupies residues 219-239 (LVGGFTTAAAFQVLVSQLKIV). Residues 240 to 263 (LNVSTKNYNGVLSIIYTLVEIFQN) lie on the Extracellular side of the membrane. Residues 264 to 284 (IGDTNLADFTAGLLTIVVCMA) form a helical membrane-spanning segment. Over 285–295 (VKELNDRFRHK) the chain is Cytoplasmic. A helical membrane pass occupies residues 296–316 (IPVPIPIEVIVTIIATAISYG). The Extracellular segment spans residues 317–344 (ANLEKNYNAGIVKSIPRGFLPPELPPVS). A helical membrane pass occupies residues 345–365 (LFSEMLAASFSIAVVAYAIAV). Residues 366-384 (SVGKVYATKYDYTIDGNQE) lie on the Cytoplasmic side of the membrane. The chain crosses the membrane as a helical span at residues 385–405 (FIAFGISNIFSGFFSCFVATT). Residues 406–421 (ALSRTAVQESTGGKTQ) are Extracellular-facing. Residues 422 to 442 (VAGIISAAIVMIAILALGKLL) traverse the membrane as a helical segment. Topologically, residues 443 to 448 (EPLQKS) are cytoplasmic. A helical membrane pass occupies residues 449–469 (VLAAVVIANLKGMFMQLCDIP). Over 470–486 (RLWRQNKIDAVIWVFTC) the chain is Extracellular. A helical transmembrane segment spans residues 487–507 (IVSIILGLDLGLLAGLIFGLL). The Cytoplasmic portion of the chain corresponds to 508 to 780 (TVVLRVQFPS…QDEAMRTLAS (273 aa)). Residues 535–729 (NYKNIEEPQG…LTVHDAILYL (195 aa)) enclose the STAS domain.

Belongs to the SLC26A/SulP transporter (TC 2.A.53) family. As to quaternary structure, interacts with IQGAP1; this interaction enhances the chloride-bicarbonate exchange activity of SLC26A4. As to expression, highly expressed in the kidney (at protein level). High expression in adult thyroid, lower expression in adult and fetal kidney and fetal brain. Not expressed in other tissues.

Its subcellular location is the cell membrane. It is found in the apical cell membrane. The enzyme catalyses chloride(in) = chloride(out). The catalysed reaction is iodide(out) = iodide(in). It catalyses the reaction hydrogencarbonate(in) + chloride(out) = hydrogencarbonate(out) + chloride(in). It carries out the reaction iodide(in) + hydrogencarbonate(out) = iodide(out) + hydrogencarbonate(in). The enzyme catalyses iodide(in) + chloride(out) = iodide(out) + chloride(in). The catalysed reaction is formate(in) + chloride(out) = formate(out) + chloride(in). In terms of biological role, sodium-independent transporter of chloride and iodide. Mediates electroneutral chloride-bicarbonate, chloride-iodide and chloride-formate exchange with 1:1 stoichiometry. Mediates electroneutral iodide-bicarbonate exchange. The protein is Pendrin (SLC26A4) of Homo sapiens (Human).